The primary structure comprises 162 residues: F protein (162 aa).

Residues 1–23 (MSTNPKPQKKKTNVTPTVAHRTS) are disordered. The span at 13–23 (NVTPTVAHRTS) shows a compositional bias: polar residues.

It localises to the host cytoplasm. It is found in the host perinuclear region. The chain is F protein from Hepatitis C virus genotype 1a (isolate 1) (HCV).